Reading from the N-terminus, the 94-residue chain is Pyrimidine/purine nucleoside phosphorylase (94 aa).

It belongs to the nucleoside phosphorylase PpnP family.

The enzyme catalyses a purine D-ribonucleoside + phosphate = a purine nucleobase + alpha-D-ribose 1-phosphate. It carries out the reaction adenosine + phosphate = alpha-D-ribose 1-phosphate + adenine. The catalysed reaction is cytidine + phosphate = cytosine + alpha-D-ribose 1-phosphate. It catalyses the reaction guanosine + phosphate = alpha-D-ribose 1-phosphate + guanine. The enzyme catalyses inosine + phosphate = alpha-D-ribose 1-phosphate + hypoxanthine. It carries out the reaction thymidine + phosphate = 2-deoxy-alpha-D-ribose 1-phosphate + thymine. The catalysed reaction is uridine + phosphate = alpha-D-ribose 1-phosphate + uracil. It catalyses the reaction xanthosine + phosphate = alpha-D-ribose 1-phosphate + xanthine. Functionally, catalyzes the phosphorolysis of diverse nucleosides, yielding D-ribose 1-phosphate and the respective free bases. Can use uridine, adenosine, guanosine, cytidine, thymidine, inosine and xanthosine as substrates. Also catalyzes the reverse reactions. The sequence is that of Pyrimidine/purine nucleoside phosphorylase from Salmonella typhimurium (strain LT2 / SGSC1412 / ATCC 700720).